The chain runs to 400 residues: Methylthioribose kinase (400 aa).

ATP-binding positions include Asn40, Lys57, and Glu111–Leu113. Asp229 is a binding site for substrate. Position 246–248 (Asp246–Glu248) interacts with ATP. A substrate-binding site is contributed by Arg344.

This sequence belongs to the methylthioribose kinase family. In terms of assembly, homodimer.

It carries out the reaction 5-(methylsulfanyl)-D-ribose + ATP = 5-(methylsulfanyl)-alpha-D-ribose 1-phosphate + ADP + H(+). Its pathway is amino-acid biosynthesis; L-methionine biosynthesis via salvage pathway; S-methyl-5-thio-alpha-D-ribose 1-phosphate from S-methyl-5'-thioadenosine (hydrolase route): step 2/2. Catalyzes the phosphorylation of methylthioribose into methylthioribose-1-phosphate. The chain is Methylthioribose kinase from Pectobacterium atrosepticum (strain SCRI 1043 / ATCC BAA-672) (Erwinia carotovora subsp. atroseptica).